A 325-amino-acid polypeptide reads, in one-letter code: MTRYSRITGTGSYLPPNRLTNAQLAAELAVKGVETSDEWIVERTGIKARHFAAPDVTSSDLGLEAAKRAIEAAGLQAADIDLIIVATSTPDMVFPSVACILQHKLGIAGCPAFDLQAVCSGFVYALTVADAMIKSGAASKALVIGAEVFSRILDFSDRTTCVLFGDGAGAVVLEASETPGILASDLHADGKHVGILCVPGHVSGGQVLGSPLLTMDGKAVFKLAVGVLESAARATLAKAGLLETDIDWLIPHQANLRIMHSTAKKLKLPLEKLIVTVDEHGNTSAASIPLALDEAVRSGKVKKGDILMLEGVGGGFTWGAVLLKY.

Residues Cys-119 and His-252 contribute to the active site. Positions 253–257 (QANLR) are ACP-binding. Asn-282 is a catalytic residue.

The protein belongs to the thiolase-like superfamily. FabH family. As to quaternary structure, homodimer.

The protein resides in the cytoplasm. The catalysed reaction is malonyl-[ACP] + acetyl-CoA + H(+) = 3-oxobutanoyl-[ACP] + CO2 + CoA. It participates in lipid metabolism; fatty acid biosynthesis. In terms of biological role, catalyzes the condensation reaction of fatty acid synthesis by the addition to an acyl acceptor of two carbons from malonyl-ACP. Catalyzes the first condensation reaction which initiates fatty acid synthesis and may therefore play a role in governing the total rate of fatty acid production. Possesses both acetoacetyl-ACP synthase and acetyl transacylase activities. Its substrate specificity determines the biosynthesis of branched-chain and/or straight-chain of fatty acids. In Polaromonas naphthalenivorans (strain CJ2), this protein is Beta-ketoacyl-[acyl-carrier-protein] synthase III.